The following is a 366-amino-acid chain: MGKIRVGLIFGGQSSEHEVSLQSARNILQAIDGERFEVSLIGVDKQGRWHASQASNFLLNADDPGRIALRESGENLALVPGECSGQLQTAANAHPLAQIDVAFPIVHGTLGEDGSLQGLLRMANIPFVGAGVLGSAVCMDKDVAKRLLRDAGLKVAPFVSLTRSKAAGADLSAIVEQLGLPLFVKPANQGSSVGVSKVKREADLRAALDEAFRYDHKVLVEQAVIGREIECAVLGNERPRASGCGEIVLSDEFYAYDTKYLNEDGARVAVPADIPDEACQRIRGIAIEAFQALECSGMARVDVFLTPDGEVVINELNTLPGFTNISMYPKLWQAAGMSYRELITALIELALEKGRMDEALSRSCQY.

Residues 145–348 enclose the ATP-grasp domain; that stretch reads KRLLRDAGLK…YRELITALIE (204 aa). 175 to 230 lines the ATP pocket; the sequence is VEQLGLPLFVKPANQGSSVGVSKVKREADLRAALDEAFRYDHKVLVEQAVIGREIE. Positions 302, 315, and 317 each coordinate Mg(2+).

The protein belongs to the D-alanine--D-alanine ligase family. Mg(2+) serves as cofactor. It depends on Mn(2+) as a cofactor.

It is found in the cytoplasm. The catalysed reaction is 2 D-alanine + ATP = D-alanyl-D-alanine + ADP + phosphate + H(+). It functions in the pathway cell wall biogenesis; peptidoglycan biosynthesis. Functionally, cell wall formation. This is D-alanine--D-alanine ligase A from Chromobacterium violaceum (strain ATCC 12472 / DSM 30191 / JCM 1249 / CCUG 213 / NBRC 12614 / NCIMB 9131 / NCTC 9757 / MK).